The primary structure comprises 48 residues: Ambineela (48 aa).

As to quaternary structure, monomer. Post-translationally, the blue color is due to an unidentified non-fluorescent cofactor, covalently bound to it.

In terms of biological role, ambineela is a blue protein and has a pI of 8.7. This Acidianus ambivalens (Desulfurolobus ambivalens) protein is Ambineela.